A 418-amino-acid chain; its full sequence is Alpha-(1-&gt;3)-arabinofuranosyltransferase (418 aa).

11 helical membrane-spanning segments follow: residues 25–45 (NAVA…VLAI), 81–101 (YLYN…THFT), 102–122 (LARW…FGLL), 125–145 (LSGW…AMLT), 153–173 (IFSN…WCVV), 183–203 (VIGL…LPLV), 210–230 (LILG…LVPG), 266–286 (MEIT…LALL), 293–312 (PYFW…FFLS), 327–349 (IFTL…AYFF), and 372–392 (ATVG…IWFI).

The protein belongs to the glycosyltransferase 87 family.

The protein localises to the cell membrane. It carries out the reaction Adds an alpha-D-arabinofuranosyl group from trans,octacis-decaprenylphospho-beta-D-arabinofuranose at the 3-O-position of an alpha-(1-&gt;5)-arabinofuranan chain attached to a beta-(1-&gt;5)-galactofuranan chain.. It functions in the pathway cell wall biogenesis; cell wall polysaccharide biosynthesis. Functionally, involved in the biosynthesis of the arabinogalactan (AG) region of the mycolylarabinogalactan-peptidoglycan (mAGP) complex, an essential component of the corynebacterial cell wall. Catalyzes the addition of an arabinofuranosyl (Araf) residue from the sugar donor beta-D-arabinofuranosyl-1-monophosphoryldecaprenol (DPA) on the C-3 of an alpha-(1-&gt;5)-linked Araf from the arabinan backbone of AG. This chain is Alpha-(1-&gt;3)-arabinofuranosyltransferase, found in Corynebacterium glutamicum (strain ATCC 13032 / DSM 20300 / JCM 1318 / BCRC 11384 / CCUG 27702 / LMG 3730 / NBRC 12168 / NCIMB 10025 / NRRL B-2784 / 534).